Consider the following 340-residue polypeptide: Anthranilate phosphoribosyltransferase (340 aa).

5-phospho-alpha-D-ribose 1-diphosphate is bound by residues Gly-83, 86-87, Thr-91, 93-96, 111-119, and Ser-123; these read GD, NIST, and KHGNRSITS. Gly-83 is an anthranilate binding site. Mg(2+) is bound at residue Ser-95. Asn-114 serves as a coordination point for anthranilate. Arg-169 serves as a coordination point for anthranilate. Positions 228 and 229 each coordinate Mg(2+).

The protein belongs to the anthranilate phosphoribosyltransferase family. As to quaternary structure, homodimer. It depends on Mg(2+) as a cofactor.

It catalyses the reaction N-(5-phospho-beta-D-ribosyl)anthranilate + diphosphate = 5-phospho-alpha-D-ribose 1-diphosphate + anthranilate. It participates in amino-acid biosynthesis; L-tryptophan biosynthesis; L-tryptophan from chorismate: step 2/5. In terms of biological role, catalyzes the transfer of the phosphoribosyl group of 5-phosphorylribose-1-pyrophosphate (PRPP) to anthranilate to yield N-(5'-phosphoribosyl)-anthranilate (PRA). The protein is Anthranilate phosphoribosyltransferase of Solibacter usitatus (strain Ellin6076).